A 142-amino-acid chain; its full sequence is uncharacterized protein (142 aa).

N-linked (GlcNAc...) asparagine; by host glycans are attached at residues Asn-29 and Asn-67. Residues 88-108 (VFYLGYPVIFIIGVTYFSIIA) traverse the membrane as a helical segment.

The protein resides in the membrane. This is an uncharacterized protein from Acanthamoeba polyphaga mimivirus (APMV).